The chain runs to 273 residues: Dermonecrotic toxin LdSicTox-alphaIB3b (273 aa).

The active site involves His5. The Mg(2+) site is built by Glu25 and Asp27. The active-site Nucleophile is the His41. 2 cysteine pairs are disulfide-bonded: Cys45-Cys51 and Cys47-Cys190. Mg(2+) is bound at residue Asp85.

This sequence belongs to the arthropod phospholipase D family. Class II subfamily. Mg(2+) serves as cofactor. In terms of tissue distribution, expressed by the venom gland.

The protein resides in the secreted. The enzyme catalyses an N-(acyl)-sphingosylphosphocholine = an N-(acyl)-sphingosyl-1,3-cyclic phosphate + choline. It carries out the reaction an N-(acyl)-sphingosylphosphoethanolamine = an N-(acyl)-sphingosyl-1,3-cyclic phosphate + ethanolamine. It catalyses the reaction a 1-acyl-sn-glycero-3-phosphocholine = a 1-acyl-sn-glycero-2,3-cyclic phosphate + choline. The catalysed reaction is a 1-acyl-sn-glycero-3-phosphoethanolamine = a 1-acyl-sn-glycero-2,3-cyclic phosphate + ethanolamine. Functionally, dermonecrotic toxins cleave the phosphodiester linkage between the phosphate and headgroup of certain phospholipids (sphingolipid and lysolipid substrates), forming an alcohol (often choline) and a cyclic phosphate. This toxin acts on sphingomyelin (SM). It may also act on ceramide phosphoethanolamine (CPE), lysophosphatidylcholine (LPC) and lysophosphatidylethanolamine (LPE), but not on lysophosphatidylserine (LPS), and lysophosphatidylglycerol (LPG). It acts by transphosphatidylation, releasing exclusively cyclic phosphate products as second products. Induces dermonecrosis, hemolysis, increased vascular permeability, edema, inflammatory response, and platelet aggregation. The chain is Dermonecrotic toxin LdSicTox-alphaIB3b from Loxosceles deserta (Desert recluse spider).